Reading from the N-terminus, the 338-residue chain is tRNA N6-adenosine threonylcarbamoyltransferase (338 aa).

Fe cation contacts are provided by H110 and H114. Substrate-binding positions include 132–136 (VLSGG), D165, G178, and N274. Residue D298 coordinates Fe cation.

The protein belongs to the KAE1 / TsaD family. It depends on Fe(2+) as a cofactor.

It localises to the cytoplasm. The enzyme catalyses L-threonylcarbamoyladenylate + adenosine(37) in tRNA = N(6)-L-threonylcarbamoyladenosine(37) in tRNA + AMP + H(+). In terms of biological role, required for the formation of a threonylcarbamoyl group on adenosine at position 37 (t(6)A37) in tRNAs that read codons beginning with adenine. Is involved in the transfer of the threonylcarbamoyl moiety of threonylcarbamoyl-AMP (TC-AMP) to the N6 group of A37, together with TsaE and TsaB. TsaD likely plays a direct catalytic role in this reaction. The polypeptide is tRNA N6-adenosine threonylcarbamoyltransferase (Borrelia duttonii (strain Ly)).